Consider the following 201-residue polypeptide: MTKVLVLYYSMYGHVETMAKAIAEGAGSVEGVEVTIKRVPELMTDEQAKKAGVKLDQSAPIATPSELADYDAIIFGTPTRFGNMCAQMRNFLDQTGGLWAGGKLINKVGSVFTSTGTQHGGQETTITSFHTNLFHYGMIVVGVPYSCQEMTNMNEITGGTPYGASTLAGGDGSRQPSENEIKIAKCQGVHVAKVAKKQSAS.

The Flavodoxin-like domain occupies 4–191 (VLVLYYSMYG…KIAKCQGVHV (188 aa)). Residues 10–15 (SMYGHV) and 79–81 (TRF) contribute to the FMN site. Y12 is an NAD(+) binding site. W99 serves as a coordination point for substrate. FMN is bound by residues 114–120 (STGTQHG) and H135.

It belongs to the WrbA family. Requires FMN as cofactor.

The enzyme catalyses a quinone + NADH + H(+) = a quinol + NAD(+). The catalysed reaction is a quinone + NADPH + H(+) = a quinol + NADP(+). The protein is NAD(P)H dehydrogenase (quinone) of Hydrogenovibrio crunogenus (strain DSM 25203 / XCL-2) (Thiomicrospira crunogena).